A 396-amino-acid polypeptide reads, in one-letter code: NADH-quinone oxidoreductase subunit D (396 aa).

Belongs to the complex I 49 kDa subunit family. As to quaternary structure, NDH-1 is composed of 14 different subunits. Subunits NuoB, C, D, E, F, and G constitute the peripheral sector of the complex.

The protein localises to the cell inner membrane. The enzyme catalyses a quinone + NADH + 5 H(+)(in) = a quinol + NAD(+) + 4 H(+)(out). In terms of biological role, NDH-1 shuttles electrons from NADH, via FMN and iron-sulfur (Fe-S) centers, to quinones in the respiratory chain. The immediate electron acceptor for the enzyme in this species is believed to be ubiquinone. Couples the redox reaction to proton translocation (for every two electrons transferred, four hydrogen ions are translocated across the cytoplasmic membrane), and thus conserves the redox energy in a proton gradient. The chain is NADH-quinone oxidoreductase subunit D from Orientia tsutsugamushi (strain Ikeda) (Rickettsia tsutsugamushi).